The chain runs to 577 residues: ATP-dependent zinc metalloprotease FtsH (577 aa).

At 1-3 (MKK) the chain is on the cytoplasmic side. A helical transmembrane segment spans residues 4-24 (LYWIILIAVVLACSGILMSLH). The Extracellular portion of the chain corresponds to 25-98 (LSVTKEEMTY…IKVDNSDSYS (74 aa)). A helical membrane pass occupies residues 99 to 119 (ATKVIQIILIITVGTGVFLFI). Residues 120-577 (RTSGGKDKPL…IDRICLKEAV (458 aa)) lie on the Cytoplasmic side of the membrane. 186-193 (GPPGTGKT) contacts ATP. His-409 lines the Zn(2+) pocket. Residue Glu-410 is part of the active site. Zn(2+) is bound by residues His-413 and Asp-487.

In the central section; belongs to the AAA ATPase family. It in the C-terminal section; belongs to the peptidase M41 family. As to quaternary structure, homohexamer. It depends on Zn(2+) as a cofactor.

The protein resides in the cell membrane. Its function is as follows. Acts as a processive, ATP-dependent zinc metallopeptidase for both cytoplasmic and membrane proteins. Plays a role in the quality control of integral membrane proteins. The chain is ATP-dependent zinc metalloprotease FtsH from Lachnoclostridium phytofermentans (strain ATCC 700394 / DSM 18823 / ISDg) (Clostridium phytofermentans).